A 159-amino-acid chain; its full sequence is Large ribosomal subunit protein bL35c (159 aa).

The transit peptide at 1-86 (MAMASATATL…TSSPSFTVFA (86 aa)) directs the protein to the chloroplast.

In terms of assembly, component of the chloroplast large ribosomal subunit (LSU). Mature 70S chloroplast ribosomes of higher plants consist of a small (30S) and a large (50S) subunit. The 30S small subunit contains 1 molecule of ribosomal RNA (16S rRNA) and 24 different proteins. The 50S large subunit contains 3 rRNA molecules (23S, 5S and 4.5S rRNA) and 33 different proteins.

The protein localises to the plastid. It is found in the chloroplast. Component of the chloroplast ribosome (chloro-ribosome), a dedicated translation machinery responsible for the synthesis of chloroplast genome-encoded proteins, including proteins of the transcription and translation machinery and components of the photosynthetic apparatus. The sequence is that of Large ribosomal subunit protein bL35c (RPL35) from Spinacia oleracea (Spinach).